Consider the following 360-residue polypeptide: NAD(P)H-quinone oxidoreductase subunit 1, chloroplastic (360 aa).

The next 9 membrane-spanning stretches (helical) occupy residues Ile27–Ile47, Phe98–Phe118, Ile129–Gly149, Ala165–Leu185, Phe203–Leu223, Tyr248–Ser268, Leu269–Leu289, Ile297–Ile317, and Phe340–Leu360.

The protein belongs to the complex I subunit 1 family. NDH is composed of at least 16 different subunits, 5 of which are encoded in the nucleus.

It is found in the plastid. The protein localises to the chloroplast thylakoid membrane. It carries out the reaction a plastoquinone + NADH + (n+1) H(+)(in) = a plastoquinol + NAD(+) + n H(+)(out). The enzyme catalyses a plastoquinone + NADPH + (n+1) H(+)(in) = a plastoquinol + NADP(+) + n H(+)(out). NDH shuttles electrons from NAD(P)H:plastoquinone, via FMN and iron-sulfur (Fe-S) centers, to quinones in the photosynthetic chain and possibly in a chloroplast respiratory chain. The immediate electron acceptor for the enzyme in this species is believed to be plastoquinone. Couples the redox reaction to proton translocation, and thus conserves the redox energy in a proton gradient. This Nasturtium officinale (Watercress) protein is NAD(P)H-quinone oxidoreductase subunit 1, chloroplastic.